A 238-amino-acid polypeptide reads, in one-letter code: Ubiquinone biosynthesis O-methyltransferase (238 aa).

The S-adenosyl-L-methionine site is built by arginine 39, glycine 58, aspartate 79, and methionine 123.

Belongs to the methyltransferase superfamily. UbiG/COQ3 family.

The enzyme catalyses a 3-demethylubiquinol + S-adenosyl-L-methionine = a ubiquinol + S-adenosyl-L-homocysteine + H(+). The catalysed reaction is a 3-(all-trans-polyprenyl)benzene-1,2-diol + S-adenosyl-L-methionine = a 2-methoxy-6-(all-trans-polyprenyl)phenol + S-adenosyl-L-homocysteine + H(+). It functions in the pathway cofactor biosynthesis; ubiquinone biosynthesis. Functionally, O-methyltransferase that catalyzes the 2 O-methylation steps in the ubiquinone biosynthetic pathway. This is Ubiquinone biosynthesis O-methyltransferase from Hahella chejuensis (strain KCTC 2396).